Consider the following 253-residue polypeptide: Imidazole glycerol phosphate synthase subunit HisF (253 aa).

Active-site residues include D11 and D130.

Belongs to the HisA/HisF family. In terms of assembly, heterodimer of HisH and HisF.

It localises to the cytoplasm. The enzyme catalyses 5-[(5-phospho-1-deoxy-D-ribulos-1-ylimino)methylamino]-1-(5-phospho-beta-D-ribosyl)imidazole-4-carboxamide + L-glutamine = D-erythro-1-(imidazol-4-yl)glycerol 3-phosphate + 5-amino-1-(5-phospho-beta-D-ribosyl)imidazole-4-carboxamide + L-glutamate + H(+). Its pathway is amino-acid biosynthesis; L-histidine biosynthesis; L-histidine from 5-phospho-alpha-D-ribose 1-diphosphate: step 5/9. Its function is as follows. IGPS catalyzes the conversion of PRFAR and glutamine to IGP, AICAR and glutamate. The HisF subunit catalyzes the cyclization activity that produces IGP and AICAR from PRFAR using the ammonia provided by the HisH subunit. The chain is Imidazole glycerol phosphate synthase subunit HisF from Thermoanaerobacter sp. (strain X514).